We begin with the raw amino-acid sequence, 577 residues long: Outer spore wall assembly protein SHE10 (577 aa).

An N-terminal signal peptide occupies residues 1–23; it reads MGKLIKLITTLTVLVSLLQYCCE. Coiled coils occupy residues 379–416 and 513–561; these read NETRSTLDELTNAMEKDLSEITDEIEKKVNAIREENVE and ILRS…EEDV. Residues 525-545 are compositionally biased toward basic and acidic residues; sequence RERKERERKEREKAAAEEFQR. Positions 525 to 577 are disordered; it reads RERKERERKEREKAAAEEFQRQQELLRQQEEEDEEDVSYTSTSTITTTTTMTL. Residues 562–577 show a composition bias toward low complexity; sequence SYTSTSTITTTTTMTL.

Belongs to the SHE10 family. Component of the mitochondria-localized RNase mitochondrial RNA-processing (RNase MRP) composed of one single RNA encoded by the NME1 gene and at least 31 proteins. Absent in the nucleus-localized RNase MRP (NuMRP).

Its subcellular location is the mitochondrion. Its function is as follows. Involved in spore wall assembly. May be a component of the mitochondrial RNase MRP (MtMRP), a ribonucleoprotein endoribonuclease involved in the cleaving RNA transcripts to generate primers for DNA replication in mitochondria. The polypeptide is Outer spore wall assembly protein SHE10 (Saccharomyces cerevisiae (strain YJM789) (Baker's yeast)).